The following is a 35-amino-acid chain: Sorbin and SH3 domain-containing protein 1 (35 aa).

The 8-residue stretch at 1-8 (LNRDDDSD) folds into the SoHo domain. Serine 15 is subject to Phosphoserine. The 14-residue stretch at 22–35 (CDDGWFVGTSRRTK) folds into the SH3 domain.

As to quaternary structure, interacts with the long isoform of AFDN and with VCL. AFDN and VCL bind to SORBS1 in a competitive manner and do not form a ternary complex. Interacts with ABL1, CBL, CBLB and INPPL1/SHIP2 through the third SH3 domain. Interaction with ABL1 occurs only after insulin stimulation while this has no effect on the interaction with INPPL1. Interacts with the insulin receptor but dissociates from it following insulin stimulation. Also interacts with SCA7, PTK2/FAK1 and flotillin. Interacts (via SH3 domain 2) with PXN. Interacts (via third SH3 domain) with the Ten-1 ICD form of TENM1; the interaction induces the translocation of SORBS1 to the nucleus. Post-translationally, O-glycosylated.

It is found in the cell junction. The protein resides in the adherens junction. Its subcellular location is the cell membrane. It localises to the cytoplasm. The protein localises to the cytoskeleton. It is found in the focal adhesion. The protein resides in the nucleus. Its subcellular location is the nucleus matrix. Its function is as follows. Plays a role in tyrosine phosphorylation of CBL by linking CBL to the insulin receptor. Required for insulin-stimulated glucose transport. Involved in formation of actin stress fibers and focal adhesions. This chain is Sorbin and SH3 domain-containing protein 1, found in Rattus norvegicus (Rat).